The following is a 371-amino-acid chain: Protein NDRG2 (371 aa).

Residues 1–22 (MAELQEVQITEEKPLLPGQTPE) form a disordered region. A2 carries the post-translational modification N-acetylalanine. At T20 the chain carries Phosphothreonine. Phosphoserine occurs at positions 326 and 328. At T330 the chain carries Phosphothreonine. S332 carries the phosphoserine modification. At T334 the chain carries Phosphothreonine. The tract at residues 334-371 (TSAASIDGSRSRSRTLSQSSESGTLPSGPPGHTMEVSC) is disordered. Phosphoserine occurs at positions 335, 338, and 344. Position 348 is a phosphothreonine (T348). 4 positions are modified to phosphoserine: S350, S352, S353, and S355. Position 357 is a phosphothreonine (T357). S370 carries the post-translational modification Phosphoserine.

Belongs to the NDRG family. As to expression, broadly expressed, with highest levels in heart, liver, skeletal muscle and aorta.

The protein localises to the cytoplasm. The protein resides in the perinuclear region. It localises to the cell projection. Its subcellular location is the growth cone. Contributes to the regulation of the Wnt signaling pathway. Down-regulates CTNNB1-mediated transcriptional activation of target genes, such as CCND1, and may thereby act as tumor suppressor. May be involved in dendritic cell and neuron differentiation. This chain is Protein NDRG2 (Ndrg2), found in Rattus norvegicus (Rat).